We begin with the raw amino-acid sequence, 454 residues long: Bifunctional protein GlmU (454 aa).

Residues 1-233 form a pyrophosphorylase region; the sequence is MQATPRPLAL…EAETIGINSR (233 aa). UDP-N-acetyl-alpha-D-glucosamine contacts are provided by residues 13-16, Lys-27, Gln-80, 85-86, 108-110, Gly-145, Glu-159, Asn-174, and Asn-231; these read LAAG, GT, and YGD. Residue Asp-110 participates in Mg(2+) binding. Asn-231 lines the Mg(2+) pocket. Residues 234 to 254 are linker; it reads AELVRAEAQFQSQRRAALIEA. Residues 255 to 454 form an N-acetyltransferase region; the sequence is GVTMQAPDSV…KAIKDAKSKD (200 aa). Arg-320 and Lys-338 together coordinate UDP-N-acetyl-alpha-D-glucosamine. The active-site Proton acceptor is His-350. Positions 353 and 364 each coordinate UDP-N-acetyl-alpha-D-glucosamine. Acetyl-CoA is bound by residues Ala-367, 373–374, Ser-392, Ser-410, and Arg-427; that span reads NY.

The protein in the N-terminal section; belongs to the N-acetylglucosamine-1-phosphate uridyltransferase family. In the C-terminal section; belongs to the transferase hexapeptide repeat family. As to quaternary structure, homotrimer. The cofactor is Mg(2+).

The protein localises to the cytoplasm. It carries out the reaction alpha-D-glucosamine 1-phosphate + acetyl-CoA = N-acetyl-alpha-D-glucosamine 1-phosphate + CoA + H(+). The catalysed reaction is N-acetyl-alpha-D-glucosamine 1-phosphate + UTP + H(+) = UDP-N-acetyl-alpha-D-glucosamine + diphosphate. It functions in the pathway nucleotide-sugar biosynthesis; UDP-N-acetyl-alpha-D-glucosamine biosynthesis; N-acetyl-alpha-D-glucosamine 1-phosphate from alpha-D-glucosamine 6-phosphate (route II): step 2/2. It participates in nucleotide-sugar biosynthesis; UDP-N-acetyl-alpha-D-glucosamine biosynthesis; UDP-N-acetyl-alpha-D-glucosamine from N-acetyl-alpha-D-glucosamine 1-phosphate: step 1/1. The protein operates within bacterial outer membrane biogenesis; LPS lipid A biosynthesis. Catalyzes the last two sequential reactions in the de novo biosynthetic pathway for UDP-N-acetylglucosamine (UDP-GlcNAc). The C-terminal domain catalyzes the transfer of acetyl group from acetyl coenzyme A to glucosamine-1-phosphate (GlcN-1-P) to produce N-acetylglucosamine-1-phosphate (GlcNAc-1-P), which is converted into UDP-GlcNAc by the transfer of uridine 5-monophosphate (from uridine 5-triphosphate), a reaction catalyzed by the N-terminal domain. The sequence is that of Bifunctional protein GlmU from Jannaschia sp. (strain CCS1).